Here is a 559-residue protein sequence, read N- to C-terminus: Berberine bridge enzyme-like A (559 aa).

The first 21 residues, Met1–Gly21, serve as a signal peptide directing secretion. Residues Asn25 and Asn37 are each glycosylated (N-linked (GlcNAc...) asparagine). A disulfide bridge links Cys29 with Cys86. In terms of domain architecture, FAD-binding PCMH-type spans Phe64–Val240. His101 carries the post-translational modification Pros-8alpha-FAD histidine. N-linked (GlcNAc...) asparagine glycans are attached at residues Asn321, Asn355, and Asn494.

The protein belongs to the oxygen-dependent FAD-linked oxidoreductase family. FAD is required as a cofactor. In terms of tissue distribution, mostly expressed in roots.

Its subcellular location is the vacuole. It functions in the pathway alkaloid biosynthesis; nicotine biosynthesis. Its function is as follows. Involved in the biosynthesis of pyridine alkaloid natural products, leading mainly to the production of anabasine, anatabine, nicotine and nornicotine, effective deterrents against herbivores with antiparasitic and pesticide properties (neurotoxins); nornicotine serves as the precursor in the synthesis of the carcinogen compound N'-nitrosonornicotine (NNN). Catalyzes a late oxidation step subsequent to the pyridine ring condensation reaction in the biosynthesis of alkaloids. In Nicotiana tabacum (Common tobacco), this protein is Berberine bridge enzyme-like A.